The chain runs to 444 residues: Xylose isomerase (444 aa).

Residues histidine 101 and aspartate 104 contribute to the active site. 7 residues coordinate Mg(2+): glutamate 232, glutamate 268, histidine 271, aspartate 296, aspartate 307, aspartate 309, and aspartate 339.

It belongs to the xylose isomerase family. As to quaternary structure, homotetramer. The cofactor is Mg(2+).

The protein resides in the cytoplasm. The enzyme catalyses alpha-D-xylose = alpha-D-xylulofuranose. This chain is Xylose isomerase, found in Thermotoga petrophila (strain ATCC BAA-488 / DSM 13995 / JCM 10881 / RKU-1).